Here is a 309-residue protein sequence, read N- to C-terminus: Probable manganese-dependent inorganic pyrophosphatase (309 aa).

6 residues coordinate Mn(2+): histidine 9, aspartate 13, aspartate 15, aspartate 75, histidine 97, and aspartate 149.

It belongs to the PPase class C family. Requires Mn(2+) as cofactor.

The protein localises to the cytoplasm. It catalyses the reaction diphosphate + H2O = 2 phosphate + H(+). The polypeptide is Probable manganese-dependent inorganic pyrophosphatase (Bacillus cereus (strain AH187)).